We begin with the raw amino-acid sequence, 195 residues long: Thioredoxin reductase-like selenoprotein T (195 aa).

Positions 1 to 19 (MRLLLLLLVAASAVVRSEA) are cleaved as a signal peptide. A cross-link (cysteinyl-selenocysteine (Cys-Sec)) is located at residues 46–49 (CVSU). Sec49 is a non-standard amino acid (selenocysteine). Residues 85-103 (IASFLSVFKLVLIGLIIVG) form a helical membrane-spanning segment.

This sequence belongs to the SelWTH family. Selenoprotein T subfamily. Post-translationally, may contain a selenide-sulfide bond between Cys-46 and Sec-49. This bond is speculated to serve as redox-active pair. Ubiquitous. Highly expressed in the endocrine pancreas. Expressed at low levels in the adult brain.

It localises to the endoplasmic reticulum membrane. The catalysed reaction is [thioredoxin]-dithiol + NADP(+) = [thioredoxin]-disulfide + NADPH + H(+). In terms of biological role, selenoprotein with thioredoxin reductase-like oxidoreductase activity. Protects dopaminergic neurons against oxidative stress and cell death. Involved in ADCYAP1/PACAP-induced calcium mobilization and neuroendocrine secretion. Plays a role in fibroblast anchorage and redox regulation. In gastric smooth muscle, modulates the contraction processes through the regulation of calcium release and MYLK activation. In pancreatic islets, involved in the control of glucose homeostasis, contributes to prolonged ADCYAP1/PACAP-induced insulin secretion. This is Thioredoxin reductase-like selenoprotein T from Mus musculus (Mouse).